Reading from the N-terminus, the 500-residue chain is Cobyric acid synthase (500 aa).

A GATase cobBQ-type domain is found at 251–449 (KLNIVIPIMP…LHGVFDHPDA (199 aa)). The active-site Nucleophile is cysteine 332. Residue histidine 441 is part of the active site.

Belongs to the CobB/CobQ family. CobQ subfamily.

It functions in the pathway cofactor biosynthesis; adenosylcobalamin biosynthesis. Its function is as follows. Catalyzes amidations at positions B, D, E, and G on adenosylcobyrinic A,C-diamide. NH(2) groups are provided by glutamine, and one molecule of ATP is hydrogenolyzed for each amidation. This is Cobyric acid synthase from Marinomonas sp. (strain MWYL1).